The chain runs to 69 residues: NADH dehydrogenase [ubiquinone] 1 beta subcomplex subunit 2 (69 aa).

The protein belongs to the complex I NDUFB2 subunit family. As to quaternary structure, complex I is composed of at least 49 different subunits.

It localises to the mitochondrion inner membrane. Functionally, accessory subunit of the mitochondrial membrane respiratory chain NADH dehydrogenase (Complex I), that is believed not to be involved in catalysis. Complex I functions in the transfer of electrons from NADH to the respiratory chain. The immediate electron acceptor for the enzyme is believed to be ubiquinone. The chain is NADH dehydrogenase [ubiquinone] 1 beta subcomplex subunit 2 from Arabidopsis thaliana (Mouse-ear cress).